Reading from the N-terminus, the 238-residue chain is MSSTALAVKGVEISFETTTLAFDCAVPAKRIVAVAGASGSGKSTLFNIIAGFEQPGRGEVRILGEEMTGRAPAERPVSIIFQEHNLFAHLDVATNVGFGISPALRLDAANRTKVEDALARVGLAGFGKRLPPTLSGGERQRVALARAFVRHRPILLLDEPFAALDPGMRAEMRALISDLHEEEGNTILMITHHPDDVRALADSVLFLDRGRIVAHDEVDRFLGRRDIAAINRFLGNEG.

The ABC transporter domain maps to 1–234; the sequence is MSSTALAVKG…RDIAAINRFL (234 aa). 36-43 lines the ATP pocket; it reads GASGSGKS.

The protein belongs to the ABC transporter superfamily. Thiamine importer (TC 3.A.1.19.1) family. As to quaternary structure, the complex is composed of two ATP-binding proteins (ThiQ), two transmembrane proteins (ThiP) and a solute-binding protein (ThiB).

The protein localises to the cell inner membrane. The enzyme catalyses thiamine(out) + ATP + H2O = thiamine(in) + ADP + phosphate + H(+). Its function is as follows. Part of the ABC transporter complex ThiBPQ involved in thiamine import. Responsible for energy coupling to the transport system. The protein is Thiamine import ATP-binding protein ThiQ of Rhizobium meliloti (strain 1021) (Ensifer meliloti).